The following is a 484-amino-acid chain: Palmitoyltransferase ZDHHC1 (484 aa).

Polar residues-rich tracts occupy residues 1–11 (MNICNKPSNKT) and 19–34 (TAPSQDSGPSPELQGQ). Residues 1–38 (MNICNKPSNKTAPEKSVWTAPSQDSGPSPELQGQRSRR) are disordered. Topologically, residues 1 to 49 (MNICNKPSNKTAPEKSVWTAPSQDSGPSPELQGQRSRRNGWSWPPHPLQ) are cytoplasmic. The tract at residues 1 to 268 (MNICNKPSNK…GHLLCFHIYL (268 aa)) is mediates interaction with STING1. The helical transmembrane segment at 50 to 70 (IVAWLLYLFFAVIGFGVLVPL) threads the bilayer. Over 71–74 (LPHH) the chain is Lumenal. A helical transmembrane segment spans residues 75 to 95 (WVPAGYACMGAIFAGHLVVHL). Residues 96-182 (TAVSIDPADA…YRLFLHSVAS (87 aa)) are Cytoplasmic-facing. In terms of domain architecture, DHHC spans 131–181 (LHCNLCDVDVSARSKHCSACNKCVCGFDHHCKWLNNCVGERNYRLFLHSVA). Catalysis depends on C161, which acts as the S-palmitoyl cysteine intermediate. Residues 183–203 (ALLGVLLLVLVATYVFVEFFV) traverse the membrane as a helical segment. At 204 to 238 (NPMRLRTNQHFEVLKNHTDVWFVFLPAAPVETQAP) the chain is on the lumenal side. The helical transmembrane segment at 239–259 (AILALAALLILLGLLSTALLG) threads the bilayer. Topologically, residues 260–484 (HLLCFHIYLM…GTPGGGDGLP (225 aa)) are cytoplasmic. 2 disordered regions span residues 341–415 (TQGQ…VHAG) and 444–484 (LGAP…DGLP). Positions 364–374 (PQKKRKRRVYR) are enriched in basic residues. Residues 380-392 (VLDRELPLPRLRE) show a composition bias toward basic and acidic residues. The span at 395–415 (TPSRRSSSSSDSTSASPVHAG) shows a compositional bias: low complexity. Residues 475-484 (GTPGGGDGLP) are compositionally biased toward gly residues.

This sequence belongs to the DHHC palmitoyltransferase family. In terms of assembly, interacts with STING1; ZDHHC1 constitutively interacts with STING1 and in presence of DNA viruses activates it by promoting its cGAMP-induced oligomerization and the recruitment of downstream signaling components. Expressed at high levels in fetal lung and heart. Expressed at lower levels in fetal liver and brain. Also detected in adult islet cells of pancreas, Leydig cells of testis, retina and molecular layer of cerebellum.

Its subcellular location is the endosome membrane. It is found in the endoplasmic reticulum membrane. The protein resides in the golgi apparatus. The enzyme catalyses L-cysteinyl-[protein] + hexadecanoyl-CoA = S-hexadecanoyl-L-cysteinyl-[protein] + CoA. Functionally, palmitoyltransferase that catalyzes the addition of palmitate onto various protein substrates, such as NCDN and NLRP3. Has a palmitoyltransferase activity toward NCDN and regulates NCDN association with endosome membranes through this palmitoylation. Acts as an activator of the NLRP3 inflammasome by mediating palmitoylation of 'Cys-130' and 'Cys-958' of NLRP3, thereby promoting NLRP3 phosphorylation and activation by NEK7. Its function is as follows. Also has a palmitoyltransferase activity-independent function in DNA virus-triggered and CGAS-mediated innate immune response. Functions as an activator of STING1 by promoting its cGAMP-induced oligomerization and the recruitment of downstream signaling components. This is Palmitoyltransferase ZDHHC1 from Mus musculus (Mouse).